An 86-amino-acid chain; its full sequence is Small ribosomal subunit protein bS20 (86 aa).

Basic residues predominate over residues 1–27 (MANSKSAKKRAIQAEKRRQHNASRRSM). The interval 1-28 (MANSKSAKKRAIQAEKRRQHNASRRSMM) is disordered.

The protein belongs to the bacterial ribosomal protein bS20 family.

Its function is as follows. Binds directly to 16S ribosomal RNA. In Vibrio parahaemolyticus serotype O3:K6 (strain RIMD 2210633), this protein is Small ribosomal subunit protein bS20.